The primary structure comprises 165 residues: NADPH-dependent 7-cyano-7-deazaguanine reductase (165 aa).

The Thioimide intermediate role is filled by Cys-56. Asp-63 acts as the Proton donor in catalysis. Substrate is bound by residues Val-78 to Ser-80 and His-97 to Glu-98.

Belongs to the GTP cyclohydrolase I family. QueF type 1 subfamily.

It is found in the cytoplasm. The catalysed reaction is 7-aminomethyl-7-carbaguanine + 2 NADP(+) = 7-cyano-7-deazaguanine + 2 NADPH + 3 H(+). It functions in the pathway tRNA modification; tRNA-queuosine biosynthesis. Its activity is regulated as follows. Is totally inhibited by 4-aminobenzylcyanide in vitro. Catalyzes the NADPH-dependent reduction of 7-cyano-7-deazaguanine (preQ0) to 7-aminomethyl-7-deazaguanine (preQ1), a late step in the queuosine pathway. Is highly specific for its natural substrate preQ0, since it cannot use various aliphatic, aromatic and heterocyclic nitriles, although it can reduce the substrate analog 5-cyanopyrrolo[2,3-d]pyrimidin-4-one with lesser efficiency. In Geobacillus kaustophilus (strain HTA426), this protein is NADPH-dependent 7-cyano-7-deazaguanine reductase.